A 120-amino-acid polypeptide reads, in one-letter code: NAD(P)H-quinone oxidoreductase subunit 3 (120 aa).

Transmembrane regions (helical) follow at residues 7–27 (YEYV…ALTA), 64–84 (MFAL…PWAV), and 89–109 (LGLL…VALV).

Belongs to the complex I subunit 3 family. NDH-1 can be composed of about 15 different subunits; different subcomplexes with different compositions have been identified which probably have different functions.

Its subcellular location is the cellular thylakoid membrane. It catalyses the reaction a plastoquinone + NADH + (n+1) H(+)(in) = a plastoquinol + NAD(+) + n H(+)(out). The enzyme catalyses a plastoquinone + NADPH + (n+1) H(+)(in) = a plastoquinol + NADP(+) + n H(+)(out). Functionally, NDH-1 shuttles electrons from an unknown electron donor, via FMN and iron-sulfur (Fe-S) centers, to quinones in the respiratory and/or the photosynthetic chain. The immediate electron acceptor for the enzyme in this species is believed to be plastoquinone. Couples the redox reaction to proton translocation, and thus conserves the redox energy in a proton gradient. Cyanobacterial NDH-1 also plays a role in inorganic carbon-concentration. The protein is NAD(P)H-quinone oxidoreductase subunit 3 of Crocosphaera subtropica (strain ATCC 51142 / BH68) (Cyanothece sp. (strain ATCC 51142)).